The chain runs to 264 residues: Cytosolic Fe-S cluster assembly factor Nubp2 homolog (264 aa).

14 to 21 contributes to the ATP binding site; the sequence is GKGGVGKS. Positions 188 and 191 each coordinate [4Fe-4S] cluster.

Belongs to the Mrp/NBP35 ATP-binding proteins family. NUBP2/CFD1 subfamily. Heterotetramer of 2 Nubp1 and 2 Nubp2 chains. [4Fe-4S] cluster is required as a cofactor.

The protein localises to the cytoplasm. Its function is as follows. Component of the cytosolic iron-sulfur (Fe/S) protein assembly (CIA) machinery. Required for maturation of extramitochondrial Fe-S proteins. The Nubp1-Nubp2 heterotetramer forms a Fe-S scaffold complex, mediating the de novo assembly of an Fe-S cluster and its transfer to target apoproteins. In Drosophila grimshawi (Hawaiian fruit fly), this protein is Cytosolic Fe-S cluster assembly factor Nubp2 homolog.